A 253-amino-acid polypeptide reads, in one-letter code: tRNA pseudouridine synthase A (253 aa).

The active-site Nucleophile is the D53. Residue Y111 participates in substrate binding.

This sequence belongs to the tRNA pseudouridine synthase TruA family. As to quaternary structure, homodimer.

The enzyme catalyses uridine(38/39/40) in tRNA = pseudouridine(38/39/40) in tRNA. Functionally, formation of pseudouridine at positions 38, 39 and 40 in the anticodon stem and loop of transfer RNAs. This chain is tRNA pseudouridine synthase A, found in Chlorobium luteolum (strain DSM 273 / BCRC 81028 / 2530) (Pelodictyon luteolum).